Consider the following 542-residue polypeptide: Chaperonin GroEL 2 (542 aa).

ATP is bound by residues 30–33, Lys51, 87–91, Gly415, and Asp496; these read TLGP and DGTTT.

This sequence belongs to the chaperonin (HSP60) family. Forms a cylinder of 14 subunits composed of two heptameric rings stacked back-to-back. Interacts with the co-chaperonin GroES.

Its subcellular location is the cytoplasm. The enzyme catalyses ATP + H2O + a folded polypeptide = ADP + phosphate + an unfolded polypeptide.. In terms of biological role, together with its co-chaperonin GroES, plays an essential role in assisting protein folding. The GroEL-GroES system forms a nano-cage that allows encapsulation of the non-native substrate proteins and provides a physical environment optimized to promote and accelerate protein folding. The sequence is that of Chaperonin GroEL 2 from Rhizobium leguminosarum.